Reading from the N-terminus, the 143-residue chain is Large ribosomal subunit protein uL11 (143 aa).

The protein belongs to the universal ribosomal protein uL11 family. In terms of assembly, part of the ribosomal stalk of the 50S ribosomal subunit. Interacts with L10 and the large rRNA to form the base of the stalk. L10 forms an elongated spine to which L12 dimers bind in a sequential fashion forming a multimeric L10(L12)X complex. In terms of processing, one or more lysine residues are methylated.

In terms of biological role, forms part of the ribosomal stalk which helps the ribosome interact with GTP-bound translation factors. This Nitrosomonas europaea (strain ATCC 19718 / CIP 103999 / KCTC 2705 / NBRC 14298) protein is Large ribosomal subunit protein uL11.